A 355-amino-acid polypeptide reads, in one-letter code: Peptide chain release factor 1 (355 aa).

Position 231 is an N5-methylglutamine (Gln-231).

Belongs to the prokaryotic/mitochondrial release factor family. Post-translationally, methylated by PrmC. Methylation increases the termination efficiency of RF1.

The protein localises to the cytoplasm. Peptide chain release factor 1 directs the termination of translation in response to the peptide chain termination codons UAG and UAA. The protein is Peptide chain release factor 1 of Sulfurovum sp. (strain NBC37-1).